Here is a 109-residue protein sequence, read N- to C-terminus: Spermidine export protein MdtI (109 aa).

The next 4 helical transmembrane spans lie at 6–26 (WIHA…NVFL), 36–56 (IYGI…SQAV), 64–84 (AYAL…WVLF), and 88–108 (LNNK…LIKL).

This sequence belongs to the drug/metabolite transporter (DMT) superfamily. Small multidrug resistance (SMR) (TC 2.A.7.1) family. MdtI subfamily. In terms of assembly, forms a complex with MdtJ.

The protein localises to the cell inner membrane. Its function is as follows. Catalyzes the excretion of spermidine. This is Spermidine export protein MdtI from Klebsiella pneumoniae subsp. pneumoniae (strain ATCC 700721 / MGH 78578).